The chain runs to 239 residues: Prolactin-8A4 (239 aa).

The N-terminal stretch at 1–31 (MMKLALSQPPFSGTLLMLVVSILLLWEKAAS) is a signal peptide. 2 disulfides stabilise this stretch: Cys35/Cys42 and Cys102/Cys215. Residues Asn211 and Asn218 are each glycosylated (N-linked (GlcNAc...) asparagine). Cys232 and Cys239 are disulfide-bonded.

Belongs to the somatotropin/prolactin family. Placental basal zone cells.

It is found in the secreted. The polypeptide is Prolactin-8A4 (Prl8a4) (Rattus norvegicus (Rat)).